The primary structure comprises 245 residues: Ribonuclease 3 (245 aa).

Residues 19-144 (ASILEERTGH…LIATIYLDGG (126 aa)) enclose the RNase III domain. Mg(2+) is bound at residue E57. Residue D61 is part of the active site. Mg(2+) is bound by residues D130 and E133. The active site involves E133. Residues 169-238 (DAKTELQEWA…AEAMLYREGV (70 aa)) enclose the DRBM domain.

The protein belongs to the ribonuclease III family. As to quaternary structure, homodimer. The cofactor is Mg(2+).

It localises to the cytoplasm. The enzyme catalyses Endonucleolytic cleavage to 5'-phosphomonoester.. Its function is as follows. Digests double-stranded RNA. Involved in the processing of primary rRNA transcript to yield the immediate precursors to the large and small rRNAs (23S and 16S). Processes some mRNAs, and tRNAs when they are encoded in the rRNA operon. Processes pre-crRNA and tracrRNA of type II CRISPR loci if present in the organism. The chain is Ribonuclease 3 from Brucella abortus (strain S19).